A 238-amino-acid chain; its full sequence is Uridylate kinase (238 aa).

Position 12 to 15 (12 to 15 (KLSG)) interacts with ATP. Residue glycine 54 coordinates UMP. ATP contacts are provided by glycine 55 and arginine 59. Residues aspartate 74 and 135 to 142 (TGNPYFTT) each bind UMP. Positions 162, 168, and 171 each coordinate ATP.

Belongs to the UMP kinase family. As to quaternary structure, homohexamer.

Its subcellular location is the cytoplasm. It carries out the reaction UMP + ATP = UDP + ADP. It functions in the pathway pyrimidine metabolism; CTP biosynthesis via de novo pathway; UDP from UMP (UMPK route): step 1/1. Its activity is regulated as follows. Inhibited by UTP. Functionally, catalyzes the reversible phosphorylation of UMP to UDP. This Nitratidesulfovibrio vulgaris (strain ATCC 29579 / DSM 644 / CCUG 34227 / NCIMB 8303 / VKM B-1760 / Hildenborough) (Desulfovibrio vulgaris) protein is Uridylate kinase.